Reading from the N-terminus, the 396-residue chain is Chorismate synthase (396 aa).

Arg41 and Arg47 together coordinate NADP(+). Residues 130 to 132, Gly298, 313 to 317, and Arg339 contribute to the FMN site; these read RAS and KPIPT.

Belongs to the chorismate synthase family. As to quaternary structure, homotetramer. Requires FMNH2 as cofactor.

The enzyme catalyses 5-O-(1-carboxyvinyl)-3-phosphoshikimate = chorismate + phosphate. It participates in metabolic intermediate biosynthesis; chorismate biosynthesis; chorismate from D-erythrose 4-phosphate and phosphoenolpyruvate: step 7/7. Functionally, catalyzes the anti-1,4-elimination of the C-3 phosphate and the C-6 proR hydrogen from 5-enolpyruvylshikimate-3-phosphate (EPSP) to yield chorismate, which is the branch point compound that serves as the starting substrate for the three terminal pathways of aromatic amino acid biosynthesis. This reaction introduces a second double bond into the aromatic ring system. In Syntrophomonas wolfei subsp. wolfei (strain DSM 2245B / Goettingen), this protein is Chorismate synthase.